The sequence spans 393 residues: Sulfite oxidase (393 aa).

The tract at residues 1-27 is disordered; it reads MPGIRGPSEYSQEPPRHPSLKVNAKEP. The tract at residues 10–242 is moco domain; it reads YSQEPPRHPS…QGFFMQKDYK (233 aa). Mo-molybdopterin is bound by residues 49–53, C98, 159–161, H202, R207, and 218–220; these read YKRNH, SVD, and SVK. Residues 243–393 are homodimerization; the sequence is MFPPSVNWDN…VLLRLGHSNL (151 aa). Residues 391-393 carry the Microbody targeting signal motif; sequence SNL.

As to quaternary structure, predominantly monomer; also homodimer. Mo-molybdopterin serves as cofactor.

It is found in the peroxisome. It catalyses the reaction sulfite + O2 + H2O = sulfate + H2O2. It functions in the pathway energy metabolism; sulfur metabolism. Its function is as follows. Probably involved in sulfite oxidative detoxification. This Arabidopsis thaliana (Mouse-ear cress) protein is Sulfite oxidase (SOX).